The primary structure comprises 1109 residues: Myosin ID heavy chain (1109 aa).

Residues 7–687 (HGVDDMVMLS…TVFNLEELRE (681 aa)) enclose the Myosin motor domain. 101–108 (GESGAGKT) provides a ligand contact to ATP. The tract at residues 564–586 (IGALVKALSACTPHYIRCIKPNG) is actin-binding. Residues 725–919 (KERRRLSIER…VSTPSDGLPA (195 aa)) form the TH1 domain. Residues 958-1017 (NVKPSAKALYDFDAESSMELSFKEGDILTVLDQSSGDWWDAELKGRRGKVPSNYLQLIKN) form the SH3 domain. Residues 1017–1109 (NAAPPRAGGP…APRGGMAPRV (93 aa)) are disordered. The span at 1030–1043 (TGNRAPTTTTTSGG) shows a compositional bias: low complexity.

The protein belongs to the TRAFAC class myosin-kinesin ATPase superfamily. Myosin family. Myosin I heavy chain is single-headed. Dimer of a heavy and a light chain. Inability to self-assemble into filaments.

It localises to the cell projection. Its subcellular location is the pseudopodium. The protein resides in the cytoplasm. The protein localises to the cell cortex. Its function is as follows. Myosin is a protein that binds to actin and has ATPase activity that is activated by actin. Myosin id may have a role in chemotaxis and aggregation; it could serve to stabilize and even retract cortical structures, such as pseudopods and lamellopods. Involved in the process of phagocytosis. The chain is Myosin ID heavy chain (myoD) from Dictyostelium discoideum (Social amoeba).